Reading from the N-terminus, the 504-residue chain is Signal transduction histidine-protein kinase/phosphatase MprB (504 aa).

Topologically, residues 1 to 26 are cytoplasmic; the sequence is MWWFRRRDRAPLRATSSLSLRWRVML. The helical transmembrane segment at 27-47 threads the bilayer; sequence LAMSMVAMVVVLMSFAVYAVI. Over 48-163 the chain is Extracellular; it reads SAALYSDIDN…PTEAVMNKLR (116 aa). The chain crosses the membrane as a helical span at residues 164–184; the sequence is WVLLIVGGIGVAVAAVAGGMV. Residues 185–504 lie on the Cytoplasmic side of the membrane; the sequence is TRAGLRPVGR…SVESQSTRAT (320 aa). The 53-residue stretch at 186-238 folds into the HAMP domain; it reads RAGLRPVGRLTEAAERVARTDDLRPIPVFGSDELARLTEAFNLMLRALAESRE. Positions 246-466 constitute a Histidine kinase domain; it reads DAGHELRTPL…SIYVLLPGRR (221 aa). Histidine 249 is subject to Phosphohistidine; by autocatalysis. The segment at 471–504 is disordered; that stretch reads QLPGATAGARSTDIENSRGSANVISVESQSTRAT. Residues 487-504 show a composition bias toward polar residues; it reads SRGSANVISVESQSTRAT.

Requires Mg(2+) as cofactor. Mn(2+) serves as cofactor. In terms of processing, autophosphorylated.

The protein resides in the cell membrane. It carries out the reaction ATP + protein L-histidine = ADP + protein N-phospho-L-histidine.. Its function is as follows. Member of the two-component regulatory system MprB/MprA which contributes to maintaining a balance among several systems involved in stress resistance and is required for establishment and maintenance of persistent infection in the host. In response to environmental signals MprB acts both as a membrane-associated protein kinase that undergoes autophosphorylation and subsequently transfers the phosphate to MprA, and a protein phosphatase that dephosphorylates phospho-MprA. MprB/MprA up-regulates expression of mprA and pepD. In Mycobacterium bovis (strain ATCC BAA-935 / AF2122/97), this protein is Signal transduction histidine-protein kinase/phosphatase MprB (mprB).